A 249-amino-acid chain; its full sequence is Sodium channel modifier 1 (249 aa).

The Bipartite nuclear localization signal signature appears at 4–20; sequence KREGDDQSQLNILKKRR. Residues 42–74 form a Matrin-type zinc finger; that stretch reads YSCLVCSHRPVFDTVDMLVVHRKGKRHLEGMKW. The segment covering 94–103 has biased composition (basic and acidic residues); sequence YVKAEDDRQE. Disordered regions lie at residues 94 to 116, 128 to 199, and 228 to 249; these read YVKA…QTRK, YSSC…PLTE, and ENVE…SESS. The span at 104 to 115 shows a compositional bias: polar residues; the sequence is PSSSAPLLTQTR. The segment covering 134-149 has biased composition (basic and acidic residues); the sequence is KASERSESSSKEHRND. The segment covering 150 to 170 has biased composition (polar residues); that stretch reads LANSHLSMRTESNDSRTTVHQ. Residues 230-239 are compositionally biased toward acidic residues; that stretch reads VEFDSDEEEP.

As to quaternary structure, component of the minor spliceosome, which splices U12-type introns.

It localises to the nucleus. The protein localises to the nucleoplasm. Its subcellular location is the nucleus speckle. As a component of the minor spliceosome, involved in the splicing of U12-type introns in pre-mRNAs. This Danio rerio (Zebrafish) protein is Sodium channel modifier 1 (scnm1).